Here is a 35-residue protein sequence, read N- to C-terminus: Photosystem II reaction center protein T (35 aa).

A helical transmembrane segment spans residues 3-23 (ALVYTFLLVGTLGIIFFAIFF).

It belongs to the PsbT family. In terms of assembly, PSII is composed of 1 copy each of membrane proteins PsbA, PsbB, PsbC, PsbD, PsbE, PsbF, PsbH, PsbI, PsbJ, PsbK, PsbL, PsbM, PsbT, PsbY, PsbZ, Psb30/Ycf12, at least 3 peripheral proteins of the oxygen-evolving complex and a large number of cofactors. It forms dimeric complexes.

It is found in the plastid. Its subcellular location is the chloroplast thylakoid membrane. In terms of biological role, found at the monomer-monomer interface of the photosystem II (PS II) dimer, plays a role in assembly and dimerization of PSII. PSII is a light-driven water plastoquinone oxidoreductase, using light energy to abstract electrons from H(2)O, generating a proton gradient subsequently used for ATP formation. The chain is Photosystem II reaction center protein T from Zygnema circumcarinatum (Green alga).